A 122-amino-acid chain; its full sequence is Small ribosomal subunit protein uS13 (122 aa).

Positions 96 to 122 (LPVRGQRTKTNSRTRKGKRKTIAGKKK) are disordered. Residues 101-122 (QRTKTNSRTRKGKRKTIAGKKK) are compositionally biased toward basic residues.

The protein belongs to the universal ribosomal protein uS13 family. Part of the 30S ribosomal subunit. Forms a loose heterodimer with protein S19. Forms two bridges to the 50S subunit in the 70S ribosome.

Functionally, located at the top of the head of the 30S subunit, it contacts several helices of the 16S rRNA. In the 70S ribosome it contacts the 23S rRNA (bridge B1a) and protein L5 of the 50S subunit (bridge B1b), connecting the 2 subunits; these bridges are implicated in subunit movement. Contacts the tRNAs in the A and P-sites. In Chlamydia trachomatis serovar L2 (strain ATCC VR-902B / DSM 19102 / 434/Bu), this protein is Small ribosomal subunit protein uS13.